The sequence spans 1461 residues: Potassium channel K2 (1461 aa).

Helical transmembrane passes span I44–I64, F142–L162, I183–I203, L218–F238, I242–Y262, and I281–A301. Residues Y322–P340 constitute an intramembrane region (pore-forming). A helical membrane pass occupies residues C349–I369. Positions K771–R794 are disordered.

May form oligomers or interact with other proteins.

Its subcellular location is the membrane. Its function is as follows. Contributes to transmembrane potassium transport. The chain is Potassium channel K2 from Plasmodium falciparum (isolate 3D7).